Here is a 375-residue protein sequence, read N- to C-terminus: Alpha-2,8-sialyltransferase 8B (375 aa).

Residues 1 to 6 are Cytoplasmic-facing; that stretch reads MQLQFR. Residues 7-23 traverse the membrane as a helical; Signal-anchor for type II membrane protein segment; sequence SWMLAALTLLVVFLIFA. Topologically, residues 24-375 are lumenal; sequence DISEIEEEIG…LTVGQCDGAT (352 aa). Asparagine 60, asparagine 72, asparagine 89, and asparagine 134 each carry an N-linked (GlcNAc...) asparagine glycan. Cystine bridges form between cysteine 157–cysteine 307 and cysteine 171–cysteine 371. CMP-N-acetyl-beta-neuraminate is bound by residues asparagine 162 and asparagine 185. Asparagine 219 and asparagine 234 each carry an N-linked (GlcNAc...) asparagine glycan. Residues threonine 294, threonine 295, glycine 296, tryptophan 316, tyrosine 329, and histidine 330 each coordinate CMP-N-acetyl-beta-neuraminate. Catalysis depends on histidine 346, which acts as the Proton donor/acceptor.

This sequence belongs to the glycosyltransferase 29 family. Autopolysialylated. Autopolysialylation is not a prerequisite for the polysialylation acitity, but enhances the polysialylation acitity.

The protein localises to the golgi apparatus membrane. It is found in the secreted. The protein resides in the cell membrane. The enzyme catalyses [N-acetyl-alpha-D-neuraminosyl-(2-&gt;8)](n) + CMP-N-acetyl-beta-neuraminate = [N-acetyl-alpha-D-neuraminosyl-(2-&gt;8)](n+1) + CMP + H(+). It functions in the pathway protein modification; protein glycosylation. Functionally, catalyzes the transfer of a sialic acid from a CMP-linked sialic acid donor onto a terminal alpha-2,3-, alpha-2,6-, or alpha-2,8-linked sialic acid of an N-linked glycan acceptor through alpha-2,8-linkages. Therefore, participates in polysialic acid synthesis on various sialylated N-acetyllactosaminyl oligosaccharides (alpha-2,3-, alpha-2,6-, or alpha-2,8-linked sialic acid), including NCAM1, NCAM1 N-glycans, FETUB N-glycans, and to a lesser extent sialylparagloboside (SPG) and AHSG, which does not require the initial addition of an alpha 2,8-sialic acid. However, does not exhibit sialic acid-polymerase activity. Catalyzes polysialic acid synthesis in the hippocampal on NCAM1 and supports neurite outgrowth. ST8SIA2-mediated polysialylation influences on oligodendrocyte differentiation and may promote the integrity of myelin and axons. The protein is Alpha-2,8-sialyltransferase 8B of Mus musculus (Mouse).